A 99-amino-acid chain; its full sequence is Large ribosomal subunit protein eL42 (99 aa).

It belongs to the eukaryotic ribosomal protein eL42 family.

This Chlamydomonas reinhardtii (Chlamydomonas smithii) protein is Large ribosomal subunit protein eL42 (RPL44).